A 412-amino-acid chain; its full sequence is Protein Mb3436c (412 aa).

N6-(pyridoxal phosphate)lysine is present on lysine 227.

The protein belongs to the DegT/DnrJ/EryC1 family.

This is Protein Mb3436c from Mycobacterium bovis (strain ATCC BAA-935 / AF2122/97).